Reading from the N-terminus, the 355-residue chain is dTDP-D-glucose 4,6-dehydratase (355 aa).

Residue threonine 142 coordinates substrate. Catalysis depends on aspartate 143, which acts as the Proton donor. Residues glutamate 144 and tyrosine 166 each act as proton acceptor in the active site.

This sequence belongs to the NAD(P)-dependent epimerase/dehydratase family. dTDP-glucose dehydratase subfamily. NAD(+) is required as a cofactor.

The enzyme catalyses dTDP-alpha-D-glucose = dTDP-4-dehydro-6-deoxy-alpha-D-glucose + H2O. The sequence is that of dTDP-D-glucose 4,6-dehydratase (Tgds) from Mus musculus (Mouse).